Reading from the N-terminus, the 981-residue chain is Ubiquitin carboxyl-terminal hydrolase 15 (981 aa).

A2 bears the N-acetylalanine mark. Residues 2 to 223 form a mediates interaction with SART3 region; that stretch reads AEGGAADLDT…KNEDGTWPRG (222 aa). The DUSP domain occupies 7-118; that stretch reads ADLDTQRSDI…GQEPIARKVV (112 aa). The disordered stretch occupies residues 216-237; it reads EDGTWPRGPSTPKSPGASNFST. T226 is modified (phosphothreonine). Positions 226 to 237 are enriched in polar residues; sequence TPKSPGASNFST. Phosphoserine is present on residues S229 and S242. A USP domain is found at 289 to 933; the sequence is CGLSNLGNTC…AAYVLFYQRQ (645 aa). C298 serves as the catalytic Nucleophile. Phosphothreonine is present on T602. The disordered stretch occupies residues 629-694; that stretch reads GSLHCCKDQN…GGDNDSENGL (66 aa). Residues 656–673 are compositionally biased toward acidic residues; that stretch reads METDEPDDESSQDQELPS. Catalysis depends on H891, which acts as the Proton acceptor. Residues 952 to 981 are disordered; that stretch reads SAATGIPLESDEDSNDNDNDIENENCMHTN. Acidic residues predominate over residues 960–974; that stretch reads ESDEDSNDNDNDIEN. 2 positions are modified to phosphoserine: S961 and S965.

Belongs to the peptidase C19 family. In terms of assembly, a homodimer structure has been reported; however it is unclear whether the protein form a homodimer in vivo. Identified in a complex with the COP9 signalosome complex (CSN). Interacts with SMAD1, SMAD2 and SMAD3; the interaction is direct. Forms a complex with SMURF2 and SMAD7. Interacts with TGFBR1. Interacts with SART3; the interaction is direct. May interact with RNF20 and RNF40. May interact with PRKN. Interacts with INCA1. As to quaternary structure, (Microbial infection) Interacts with human papillomavirus type 16 protein E6. Phosphorylated. Phosphorylation protects against ubiquitination and subsequent degradation by the proteasome. In terms of processing, ubiquitinated, leading to degradation by the proteasome. As to expression, expressed in skeletal muscle, kidney, heart, placenta, liver, thymus, lung, and ovary, with little or no expression in other tissues.

It localises to the cytoplasm. The protein resides in the nucleus. It is found in the mitochondrion. The enzyme catalyses Thiol-dependent hydrolysis of ester, thioester, amide, peptide and isopeptide bonds formed by the C-terminal Gly of ubiquitin (a 76-residue protein attached to proteins as an intracellular targeting signal).. Functionally, hydrolase that removes conjugated ubiquitin from target proteins and regulates various pathways such as the TGF-beta receptor signaling, NF-kappa-B and RNF41/NRDP1-PRKN pathways. Acts as a key regulator of TGF-beta receptor signaling pathway, but the precise mechanism is still unclear: according to a report, acts by promoting deubiquitination of monoubiquitinated R-SMADs (SMAD1, SMAD2 and/or SMAD3), thereby alleviating inhibition of R-SMADs and promoting activation of TGF-beta target genes. According to another reports, regulates the TGF-beta receptor signaling pathway by mediating deubiquitination and stabilization of TGFBR1, leading to an enhanced TGF-beta signal. Able to mediate deubiquitination of monoubiquitinated substrates, 'Lys-27'-, 'Lys-48'- and 'Lys-63'-linked polyubiquitin chains. May also regulate gene expression and/or DNA repair through the deubiquitination of histone H2B. Acts as an inhibitor of mitophagy by counteracting the action of parkin (PRKN): hydrolyzes cleavage of 'Lys-48'- and 'Lys-63'-linked polyubiquitin chains attached by parkin on target proteins such as MFN2, thereby reducing parkin's ability to drive mitophagy. Acts as an associated component of COP9 signalosome complex (CSN) and regulates different pathways via this association: regulates NF-kappa-B by mediating deubiquitination of NFKBIA and deubiquitinates substrates bound to VCP. Involved in endosome organization by mediating deubiquitination of SQSTM1: ubiquitinated SQSTM1 forms a molecular bridge that restrains cognate vesicles in the perinuclear region and its deubiquitination releases target vesicles for fast transport into the cell periphery. Acts as a negative regulator of antifungal immunity by mediating 'Lys-27'-linked deubiquitination of CARD9, thereby inactivating CARD9. In terms of biological role, (Microbial infection) Protects APC and human papillomavirus type 16 protein E6 against degradation via the ubiquitin proteasome pathway. In Homo sapiens (Human), this protein is Ubiquitin carboxyl-terminal hydrolase 15.